Consider the following 440-residue polypeptide: MQAYFDQLDRVRYEGSKSSNPLAFRHYNPDELVLGKRMEEHLRFAACYWHTFCWNGADMFGVGAFNRPWQQPGEALALAKRKADVAFEFFHKLHVPFYCFHDVDVSPEGASLKEYINNFAQMVDVLAAKQEESGVKLLWGTANCFTNPRYGAGAATNPDPEVFSWAATQVVTAMEATHKLGGENYVLWGGREGYETLLNTDLRQEREQLGRFMQMVVEHKHKIGFQGTLLIEPKPQEPTKHQYDYDAATVYGFLKQFGLEKEIKLNIEANHATLAGHSFHHEIATAIALGLFGSVDANRGDAQLGWDTDQFPNSVEENALVMYEILKAGGFTTGGLNFDAKVRRQSTDKYDLFYGHIGAMDTMALALKIAARMIEDGELDKRIAQRYSGWNSELGQQILKGQMSLADLAKYAQEHNLSPVHQSGRQEQLENLVNHYLFDK.

Residues histidine 101 and aspartate 104 contribute to the active site. 7 residues coordinate Mg(2+): glutamate 232, glutamate 268, histidine 271, aspartate 296, aspartate 307, aspartate 309, and aspartate 339.

The protein belongs to the xylose isomerase family. In terms of assembly, homotetramer. It depends on Mg(2+) as a cofactor.

The protein localises to the cytoplasm. It catalyses the reaction alpha-D-xylose = alpha-D-xylulofuranose. The protein is Xylose isomerase of Escherichia coli (strain SE11).